The primary structure comprises 310 residues: Small ribosomal subunit biogenesis GTPase RsgA (310 aa).

Positions 77-238 (LSKQSHILAA…IIDTPGIKGF (162 aa)) constitute a CP-type G domain. GTP-binding positions include 126–129 (NKVD) and 180–188 (GHSGVGKST). Zn(2+)-binding residues include Cys-262, Cys-267, His-269, and Cys-275.

This sequence belongs to the TRAFAC class YlqF/YawG GTPase family. RsgA subfamily. In terms of assembly, monomer. Associates with 30S ribosomal subunit, binds 16S rRNA. The cofactor is Zn(2+).

It is found in the cytoplasm. In terms of biological role, one of several proteins that assist in the late maturation steps of the functional core of the 30S ribosomal subunit. Helps release RbfA from mature subunits. May play a role in the assembly of ribosomal proteins into the subunit. Circularly permuted GTPase that catalyzes slow GTP hydrolysis, GTPase activity is stimulated by the 30S ribosomal subunit. The protein is Small ribosomal subunit biogenesis GTPase RsgA of Bacteroides fragilis (strain ATCC 25285 / DSM 2151 / CCUG 4856 / JCM 11019 / LMG 10263 / NCTC 9343 / Onslow / VPI 2553 / EN-2).